A 197-amino-acid chain; its full sequence is Putative peptidyl-prolyl cis-trans isomerase (197 aa).

Positions 14 to 195 (NEIKVVMHTN…YDVVIESIDV (182 aa)) constitute a PPIase cyclophilin-type domain.

Belongs to the cyclophilin-type PPIase family.

The catalysed reaction is [protein]-peptidylproline (omega=180) = [protein]-peptidylproline (omega=0). In terms of biological role, PPIases accelerate the folding of proteins. It catalyzes the cis-trans isomerization of proline imidic peptide bonds in oligopeptides. The protein is Putative peptidyl-prolyl cis-trans isomerase of Staphylococcus epidermidis (strain ATCC 35984 / DSM 28319 / BCRC 17069 / CCUG 31568 / BM 3577 / RP62A).